The chain runs to 337 residues: Ribose-phosphate pyrophosphokinase 4 (337 aa).

Ser2 carries the N-acetylserine modification. Mg(2+) is bound by residues Asp158 and His160. Residues 241–256 form a binding of phosphoribosylpyrophosphate region; the sequence is GCHVVIVDDLVQSGGT.

The protein belongs to the ribose-phosphate pyrophosphokinase family.

It carries out the reaction D-ribose 5-phosphate + ATP = 5-phospho-alpha-D-ribose 1-diphosphate + AMP + H(+). This Arabidopsis thaliana (Mouse-ear cress) protein is Ribose-phosphate pyrophosphokinase 4 (PRS4).